Here is a 206-residue protein sequence, read N- to C-terminus: Protein sym1 (206 aa).

2 consecutive transmembrane segments (helical) span residues 107-127 and 169-189; these read VLLD…SWMT and LQYQ…FLSL.

Belongs to the peroxisomal membrane protein PXMP2/4 family.

It is found in the mitochondrion inner membrane. This chain is Protein sym1 (sym1), found in Schizosaccharomyces pombe (strain 972 / ATCC 24843) (Fission yeast).